Consider the following 583-residue polypeptide: Isocitrate dehydrogenase kinase/phosphatase (583 aa).

Residues 315-321 (APGIRGM) and lysine 336 each bind ATP. Aspartate 371 is a catalytic residue.

The protein belongs to the AceK family.

It localises to the cytoplasm. It catalyses the reaction L-seryl-[isocitrate dehydrogenase] + ATP = O-phospho-L-seryl-[isocitrate dehydrogenase] + ADP + H(+). Its function is as follows. Bifunctional enzyme which can phosphorylate or dephosphorylate isocitrate dehydrogenase (IDH) on a specific serine residue. This is a regulatory mechanism which enables bacteria to bypass the Krebs cycle via the glyoxylate shunt in response to the source of carbon. When bacteria are grown on glucose, IDH is fully active and unphosphorylated, but when grown on acetate or ethanol, the activity of IDH declines drastically concomitant with its phosphorylation. The protein is Isocitrate dehydrogenase kinase/phosphatase of Salmonella heidelberg (strain SL476).